A 529-amino-acid polypeptide reads, in one-letter code: Lysine--tRNA ligase (529 aa).

A 'HIGH' region motif is present at residues 29–37; sequence ISGSVHIGN. The 'KMSKS' region motif lies at 274–278; the sequence is AMSKS. An ATP-binding site is contributed by K277.

Belongs to the class-I aminoacyl-tRNA synthetase family.

Its subcellular location is the cytoplasm. The enzyme catalyses tRNA(Lys) + L-lysine + ATP = L-lysyl-tRNA(Lys) + AMP + diphosphate. The chain is Lysine--tRNA ligase from Methanosphaera stadtmanae (strain ATCC 43021 / DSM 3091 / JCM 11832 / MCB-3).